Here is a 141-residue protein sequence, read N- to C-terminus: uncharacterized protein (141 aa).

The chain crosses the membrane as a helical span at residues Pro13 to Val35.

It is found in the membrane. This is an uncharacterized protein from Archaeoglobus fulgidus (strain ATCC 49558 / DSM 4304 / JCM 9628 / NBRC 100126 / VC-16).